The primary structure comprises 621 residues: F-box/LRR-repeat protein 4 (621 aa).

Asymmetric dimethylarginine is present on Arg-28. The 56-residue stretch at 277-332 (NGYFDKLPYELIQLILNHLTLPDLCRLAQTCKLLSQHCCDPLQYIHLNLQPYWAKL) folds into the F-box domain. 9 LRR repeats span residues 376 to 397 (ELVR…EVIS), 402 to 421 (NLQA…AFNH), 427 to 448 (SLKR…SILN), 452 to 474 (ELQH…ASMI), 480 to 501 (KLRT…AELA), 504 to 524 (CPLL…STGC), 532 to 558 (LPNL…ACNC), 559 to 583 (TRLQ…LLES), and 584 to 609 (CKDL…LNAS).

In terms of assembly, part of a SCF (SKP1-CUL1-F-box) protein ligase complex. Interacts with VCP. Interacts with PPTC7; this interaction promotes destruction of BNIP3 and NIX and mitophagy suppression. As to expression, expressed in heart, kidney, liver, lung, pancreas, and placenta, but not in skeletal muscle.

Its subcellular location is the cytoplasm. The protein localises to the nucleus. It localises to the mitochondrion outer membrane. Functionally, substrate-recognition component of the mitochondria-localized SCF-FBXL4 ubiquitin E3 ligase complex that plays a role in the restriction of mitophagy by controlling the degradation of BNIP3 and NIX mitophagy receptors. Rescues also mitochondrial injury through reverting hyperactivation of DRP1-mediated mitochondrial fission. This is F-box/LRR-repeat protein 4 (FBXL4) from Homo sapiens (Human).